Reading from the N-terminus, the 454-residue chain is Repulsive guidance molecule A (454 aa).

Positions 1–47 are cleaved as a signal peptide; it reads MQPPRERLVVTGRAGWMGMGRGAGRSALGLWPTLAFLLCSFPAAISP. Positions 48-169 are cleaved as a propeptide — removed in mature form; that stretch reads CKILKCNSEF…NYTHCGLFGD (122 aa). The span at 114–126 shows a compositional bias: polar residues; that stretch reads HNCSKDGPTSQPR. Residues 114–141 are disordered; the sequence is HNCSKDGPTSQPRVRTLPPAGDSQERSD. N-linked (GlcNAc...) asparagine glycans are attached at residues Asn115 and Asn160. 2 disulfide bridges follow: Cys146/Cys227 and Cys164/Cys316. A glycan (N-linked (GlcNAc...) asparagine) is linked at Asn388. Ala427 is lipidated: GPI-anchor amidated alanine. The propeptide at 428–454 is removed in mature form; that stretch reads AAATTFPLAPQILLGTIPLLVLLPVLW.

This sequence belongs to the repulsive guidance molecule (RGM) family. As to quaternary structure, interacts with NEO1, BMP2 and BMP4. In terms of processing, autocatalytically cleaved at low pH; the two chains remain linked via two disulfide bonds. As to expression, expressed in gradient in periventricular layers of the developing nervous system. In adult, expressed in scattered cells throughout the brain.

It is found in the cell membrane. In terms of biological role, member of the repulsive guidance molecule (RGM) family that performs several functions in the developing and adult nervous system. Regulates cephalic neural tube closure, inhibits neurite outgrowth and cortical neuron branching, and the formation of mature synapses. Binding to its receptor NEO1/neogenin induces activation of RHOA-ROCK1/Rho-kinase signaling pathway through UNC5B-ARHGEF12/LARG-PTK2/FAK1 cascade, leading to collapse of the neuronal growth cone and neurite outgrowth inhibition. Furthermore, RGMA binding to NEO1/neogenin leads to HRAS inactivation by influencing HRAS-PTK2/FAK1-AKT1 pathway. It also functions as a bone morphogenetic protein (BMP) coreceptor that may signal through SMAD1, SMAD5, and SMAD8. This Mus musculus (Mouse) protein is Repulsive guidance molecule A (Rgma).